A 132-amino-acid polypeptide reads, in one-letter code: uncharacterized protein (132 aa).

A signal peptide spans 1–17 (MCPECFFLMLFFCGYRA). Positions 25 to 39 (SSSSSSSSSSSFRSS) are enriched in low complexity. Positions 25-79 (SSSSSSSSSSSFRSSPAYGFSGRPPGGAGCRERSQRSCLRPGGLPSLTRNPGLQR) are disordered.

This is an uncharacterized protein from Escherichia coli (strain K12).